The chain runs to 709 residues: Elongation factor G (709 aa).

Positions 8–297 (ANTRNIGIMA…AVIDYLPSPL (290 aa)) constitute a tr-type G domain. Residues 17 to 24 (AHVDAGKT), 81 to 85 (DTPGH), and 135 to 138 (NKMD) each bind GTP.

Belongs to the TRAFAC class translation factor GTPase superfamily. Classic translation factor GTPase family. EF-G/EF-2 subfamily.

The protein localises to the cytoplasm. Catalyzes the GTP-dependent ribosomal translocation step during translation elongation. During this step, the ribosome changes from the pre-translocational (PRE) to the post-translocational (POST) state as the newly formed A-site-bound peptidyl-tRNA and P-site-bound deacylated tRNA move to the P and E sites, respectively. Catalyzes the coordinated movement of the two tRNA molecules, the mRNA and conformational changes in the ribosome. In Lactococcus lactis subsp. cremoris (strain MG1363), this protein is Elongation factor G.